The following is a 307-amino-acid chain: Putative ankyrin repeat protein R229 (307 aa).

ANK repeat units lie at residues 135 to 164 (ASRV…DINV), 165 to 194 (DNDK…NVHA), 196 to 224 (DDEA…NVNA), 226 to 254 (NDYA…NPMA), 256 to 284 (RYYP…SMVY), and 286 to 307 (SYAM…LLLD).

This chain is Putative ankyrin repeat protein R229, found in Acanthamoeba polyphaga (Amoeba).